Reading from the N-terminus, the 412-residue chain is F-box/WD repeat-containing protein 4 (412 aa).

The 47-residue stretch at 25–71 folds into the F-box domain; that stretch reads GPALWRLPEELLLLICSYLDMRALGRLAQVCRWLRRFTSCDLLWRRI. 6 WD repeats span residues 154-190, 193-229, 236-277, 283-321, 327-366, and 373-409; these read RPLG…IHKI, TFTV…VWPL, QCLH…IWDL, MTHL…YWDL, KCVM…LWDR, and HAFP…VLDF.

Part of a SCF (SKP1-cullin-F-box) protein ligase complex. Interacts with POUF51. As to expression, expressed in brain, kidney, lung and liver.

Probably recognizes and binds to some phosphorylated proteins and promotes their ubiquitination and degradation. Likely to be involved in key signaling pathways crucial for normal limb development. May participate in Wnt signaling. The polypeptide is F-box/WD repeat-containing protein 4 (FBXW4) (Homo sapiens (Human)).